Reading from the N-terminus, the 452-residue chain is Trigger factor (452 aa).

The region spanning glycine 162–proline 247 is the PPIase FKBP-type domain. The interval alanine 427 to lysine 452 is disordered.

This sequence belongs to the FKBP-type PPIase family. Tig subfamily.

It is found in the cytoplasm. The catalysed reaction is [protein]-peptidylproline (omega=180) = [protein]-peptidylproline (omega=0). In terms of biological role, involved in protein export. Acts as a chaperone by maintaining the newly synthesized protein in an open conformation. Functions as a peptidyl-prolyl cis-trans isomerase. The chain is Trigger factor from Lactobacillus helveticus (strain DPC 4571).